Consider the following 103-residue polypeptide: Cell division protein FtsB (103 aa).

Topologically, residues 1 to 3 (MGK) are cytoplasmic. Residues 4 to 21 (LTLLLLALLVWLQYSLWF) traverse the membrane as a helical segment. Residues 22-103 (GKNGIHDYSR…RAATAGQTHR (82 aa)) are Periplasmic-facing. Residues 33-62 (NDDVVAQQATNAKLKARNDQLFAEIDDLNG) adopt a coiled-coil conformation.

The protein belongs to the FtsB family. In terms of assembly, part of a complex composed of FtsB, FtsL and FtsQ.

It is found in the cell inner membrane. Its function is as follows. Essential cell division protein. May link together the upstream cell division proteins, which are predominantly cytoplasmic, with the downstream cell division proteins, which are predominantly periplasmic. The sequence is that of Cell division protein FtsB from Salmonella agona (strain SL483).